A 6668-amino-acid polypeptide reads, in one-letter code: Centrosome-associated protein CEP250 (6668 aa).

20 coiled-coil regions span residues 562-589, 632-666, 873-988, 1042-1087, 1252-1307, 1333-1427, 1501-1538, 1594-1688, 1896-1930, 1975-2224, 2298-3272, 3298-3436, 3526-3599, 3697-3773, 3856-4137, 4170-4486, 4515-5078, 5165-5202, 5298-5731, and 5927-6119; these read KAFHEAQLARAREETKTLRQKIAALQQD, TRELTERLQAALAVNESLREELLEARQQLSLLRAS, HTEC…LRSS, LRMS…HEAA, VEDL…AVSR, LESL…LEKK, RPAAEEAVERETNLKKELEAAHQQKNEAEEMCKELGTQ, REAL…SEVA, HDILVGRVEELERMQTELEEQRRMLTKHLQQTTEK, EETL…AKQS, AEDE…LKME, QQEL…SRAE, LVQL…AKEE, CASL…EERR, TEML…VEAE, RRKL…LRER, LETL…FRRR, LASLGQELEEERWQVKQLQELLKEVDSARKEALEQETL, LREK…QHRV, and TQAL…LWRQ.

Proteolytically cleaved; only the full-length form localizes to the inner core, while processed version also localizes to the outer core during the onset of cell division.

The protein localises to the cytoplasm. The protein resides in the cytoskeleton. It is found in the microtubule organizing center. Its subcellular location is the centrosome. Part of the centrosome inner core complex. Required for the linking of centrosomal inner and outer cores. This is Centrosome-associated protein CEP250 from Toxoplasma gondii (strain ATCC 50611 / Me49).